A 249-amino-acid chain; its full sequence is ATP synthase subunit a (249 aa).

6 helical membrane passes run 29–49 (ASLF…FATS), 84–104 (FFPF…LGMF), 114–134 (IIVT…YGFY), 140–160 (FFGI…VASI), 193–213 (FVAS…LPLI), and 216–236 (VAMT…FAVL).

This sequence belongs to the ATPase A chain family. F-type ATPases have 2 components, CF(1) - the catalytic core - and CF(0) - the membrane proton channel. CF(1) has five subunits: alpha(3), beta(3), gamma(1), delta(1), epsilon(1). CF(0) has three main subunits: a(1), b(2) and c(9-12). The alpha and beta chains form an alternating ring which encloses part of the gamma chain. CF(1) is attached to CF(0) by a central stalk formed by the gamma and epsilon chains, while a peripheral stalk is formed by the delta and b chains.

Its subcellular location is the cell inner membrane. In terms of biological role, key component of the proton channel; it plays a direct role in the translocation of protons across the membrane. The polypeptide is ATP synthase subunit a (Agrobacterium fabrum (strain C58 / ATCC 33970) (Agrobacterium tumefaciens (strain C58))).